A 246-amino-acid chain; its full sequence is uncharacterized protein (246 aa).

A helical transmembrane segment spans residues 7-29; the sequence is GRGALASTGGCVVLAVAALMFVF.

The protein resides in the membrane. This is an uncharacterized protein from Treponema pallidum (strain Nichols).